The primary structure comprises 1000 residues: C-module-binding factor A (1000 aa).

The JmjC domain occupies 113 to 280 (PREWQEYLSH…ISYFSSLPHT (168 aa)). A PHD-type; atypical zinc finger spans residues 489–544 (KIKCHRCEKRFKKFSIIFCTNCNARFCEQCVVNTFGQNFQVLMKRNEWECFCCKGL). Residues 492-542 (CHRCEKRFKKFSIIFCTNCNARFCEQCVVNTFGQNFQVLMKRNEWECFCCK) form an RING-type; degenerate zinc finger. 2 disordered regions span residues 561–647 (RILN…SSYS) and 660–818 (SYGS…KNLK). 5 stretches are compositionally biased toward low complexity: residues 574-647 (NNNN…SSYS), 660-683 (SYGS…NNNN), 700-710 (SSSSGSGSSNS), 732-751 (NNNN…NNHH), and 760-789 (NNNN…STST). Positions 805-818 (DNDKPKGRPPKNLK) are enriched in basic and acidic residues. A DNA-binding region (a.T hook) is located at residues 810 to 818 (KGRPPKNLK).

As to quaternary structure, monomer.

It is found in the nucleus. In terms of biological role, transcriptional regulator involved in phagocytosis and pinocytosis. Both activates and represses transcription. Regulates expression of acaA, carA, pkaC, csaA, cotB and lagC. Promotes amplification of the tRNA gene-associated retrotransposon TRE5-A, a mobile genetic element formerly called as Dictyostelium repetitive element (DRE). Suppresses agnC and agnE encoding argonaute proteins which are part of a RNA interference pathway controlling TRE5-A amplification. Required for amplification of both sense and antisense RNA transcripts, but does not activate their promoters found in A-module and C-module of the TRE5-A, respectively. Nevertheless, binds to distinct DNA sequences containing A and T stretches within the C-module in vitro. The protein is C-module-binding factor A of Dictyostelium discoideum (Social amoeba).